We begin with the raw amino-acid sequence, 115 residues long: NAD(P)H-quinone oxidoreductase subunit M (115 aa).

The protein belongs to the complex I NdhM subunit family. In terms of assembly, NDH-1 can be composed of about 15 different subunits; different subcomplexes with different compositions have been identified which probably have different functions.

It is found in the cellular thylakoid membrane. It carries out the reaction a plastoquinone + NADH + (n+1) H(+)(in) = a plastoquinol + NAD(+) + n H(+)(out). The catalysed reaction is a plastoquinone + NADPH + (n+1) H(+)(in) = a plastoquinol + NADP(+) + n H(+)(out). In terms of biological role, NDH-1 shuttles electrons from an unknown electron donor, via FMN and iron-sulfur (Fe-S) centers, to quinones in the respiratory and/or the photosynthetic chain. The immediate electron acceptor for the enzyme in this species is believed to be plastoquinone. Couples the redox reaction to proton translocation, and thus conserves the redox energy in a proton gradient. Cyanobacterial NDH-1 also plays a role in inorganic carbon-concentration. The sequence is that of NAD(P)H-quinone oxidoreductase subunit M from Synechococcus sp. (strain CC9605).